Consider the following 1070-residue polypeptide: Probable arabinosyltransferase C (1070 aa).

Helical transmembrane passes span 10–32 (IARL…TPFL), 210–232 (LLKT…ALHL), 247–269 (SRWW…WHFV), 399–421 (VATS…LFSG), 425–442 (IASI…LTIL), 449–471 (FGAV…LIFR), 512–534 (SVAR…AMSL), 547–564 (SRRI…MMFT), 574–596 (VFAG…AALR), 603–625 (VFAA…WWYV), 645–664 (TALL…FHFV), and 685–707 (SPIA…MAMI).

The protein belongs to the emb family.

It localises to the cell membrane. Functionally, arabinosyl transferase responsible for the polymerization of arabinose into the arabinan of arabinogalactan. This chain is Probable arabinosyltransferase C (embC), found in Mycobacterium leprae (strain TN).